Here is a 565-residue protein sequence, read N- to C-terminus: uncharacterized protein (565 aa).

5 consecutive transmembrane segments (helical) span residues 4–26 (FVQF…AVWV), 33–55 (GYGL…VGAA), 68–90 (SLLY…VNAL), 97–119 (YAIL…TQFF), and 162–184 (ISAM…IILL). RCK C-terminal domains lie at 210 to 295 (PNVD…LGPE) and 296 to 379 (VPDA…IFGV). The next 5 membrane-spanning stretches (helical) occupy residues 389–411 (LLTL…PAFG), 415–432 (GLGN…VSSI), 453–472 (LGLI…DLLT), 482–504 (IFIV…GFHI), and 539–561 (WLGF…YFAM).

It belongs to the AAE transporter (TC 2.A.81) family.

It is found in the cell membrane. This is an uncharacterized protein from Bordetella parapertussis (strain 12822 / ATCC BAA-587 / NCTC 13253).